The following is a 410-amino-acid chain: Multifunctional CCA protein (410 aa).

Gly8 and Arg11 together coordinate ATP. CTP is bound by residues Gly8 and Arg11. Residues Asp21 and Asp23 each coordinate Mg(2+). 3 residues coordinate ATP: Arg91, Arg138, and Arg141. Arg91, Arg138, and Arg141 together coordinate CTP. The HD domain occupies 229-347 (TGVHQEMVSD…AQLALVCEAD (119 aa)).

The protein belongs to the tRNA nucleotidyltransferase/poly(A) polymerase family. Bacterial CCA-adding enzyme type 1 subfamily. Monomer. Can also form homodimers and oligomers. Requires Mg(2+) as cofactor. Ni(2+) serves as cofactor.

It catalyses the reaction a tRNA precursor + 2 CTP + ATP = a tRNA with a 3' CCA end + 3 diphosphate. The enzyme catalyses a tRNA with a 3' CCA end + 2 CTP + ATP = a tRNA with a 3' CCACCA end + 3 diphosphate. Its function is as follows. Catalyzes the addition and repair of the essential 3'-terminal CCA sequence in tRNAs without using a nucleic acid template. Adds these three nucleotides in the order of C, C, and A to the tRNA nucleotide-73, using CTP and ATP as substrates and producing inorganic pyrophosphate. tRNA 3'-terminal CCA addition is required both for tRNA processing and repair. Also involved in tRNA surveillance by mediating tandem CCA addition to generate a CCACCA at the 3' terminus of unstable tRNAs. While stable tRNAs receive only 3'-terminal CCA, unstable tRNAs are marked with CCACCA and rapidly degraded. The protein is Multifunctional CCA protein of Xanthomonas campestris pv. campestris (strain B100).